The following is a 108-amino-acid chain: Heme oxygenase (staphylobilin-producing) 2 (108 aa).

Positions 2–93 (FMAENRLQLQ…DDDGQQSPIL (92 aa)) constitute an ABM domain. Asparagine 6 provides a ligand contact to Fe cation. Residues 21-28 (RFYNRQGI) and histidine 76 contribute to the heme site.

Belongs to the antibiotic biosynthesis monooxygenase family. Heme-degrading monooxygenase IsdG subfamily. In terms of assembly, homodimer.

The protein resides in the cytoplasm. The catalysed reaction is heme b + 5 AH2 + 4 O2 + 2 H(+) = delta-staphylobilin + Fe(2+) + formaldehyde + 5 A + 4 H2O. The enzyme catalyses heme b + 5 AH2 + 4 O2 + 2 H(+) = beta-staphylobilin + Fe(2+) + formaldehyde + 5 A + 4 H2O. Allows bacterial pathogens to use the host heme as an iron source. Catalyzes the oxidative degradation of the heme macrocyclic porphyrin ring to the oxo-bilirubin chromophore staphylobilin (a mixture of the linear tetrapyrroles 5-oxo-delta-bilirubin and 15-oxo-beta-bilirubin) in the presence of a suitable electron donor such as ascorbate or NADPH--cytochrome P450 reductase, with subsequent release of free iron. The polypeptide is Heme oxygenase (staphylobilin-producing) 2 (isdI) (Staphylococcus aureus (strain MRSA252)).